Here is a 1588-residue protein sequence, read N- to C-terminus: Pentafunctional AROM polypeptide (1588 aa).

The segment at 1–392 is 3-dehydroquinate synthase; sequence MVQLAKVPIL…YGDSAQFVSD (392 aa). Residues 43-45, 78-81, 109-111, and aspartate 114 each bind NAD(+); these read DTN, ETSK, and GGV. Arginine 125 serves as a coordination point for 7-phospho-2-dehydro-3-deoxy-D-arabino-heptonate. NAD(+) is bound at residue 134–135; that stretch reads TS. The 7-phospho-2-dehydro-3-deoxy-D-arabino-heptonate site is built by aspartate 141 and lysine 147. NAD(+) is bound at residue lysine 156. Position 157 (asparagine 157) interacts with 7-phospho-2-dehydro-3-deoxy-D-arabino-heptonate. Residues 174 to 177 and asparagine 185 contribute to the NAD(+) site; that span reads WLET. Glutamate 189 is a Zn(2+) binding site. 7-phospho-2-dehydro-3-deoxy-D-arabino-heptonate is bound by residues 189–192 and lysine 258; that span reads EVIK. Glutamate 268 acts as the Proton acceptor; for 3-dehydroquinate synthase activity in catalysis. Residues 272–276 and histidine 279 contribute to the 7-phospho-2-dehydro-3-deoxy-D-arabino-heptonate site; that span reads RNLLN. Histidine 279 lines the Zn(2+) pocket. Histidine 283 (proton acceptor; for 3-dehydroquinate synthase activity) is an active-site residue. Positions 295 and 364 each coordinate 7-phospho-2-dehydro-3-deoxy-D-arabino-heptonate. A Zn(2+)-binding site is contributed by histidine 295. The interval 405 to 871 is EPSP synthase; the sequence is VYPFKDIPAD…WDVLHSELGA (467 aa). Cysteine 853 (for EPSP synthase activity) is an active-site residue. A shikimate kinase region spans residues 890–1080; that stretch reads SVVIIGMRAA…IPSGRSAFVC (191 aa). An ATP-binding site is contributed by 895 to 902; that stretch reads GMRAAGKT. The segment at 1081–1293 is 3-dehydroquinase; sequence LTFDDLTEQT…AAPGQLTVAQ (213 aa). Residue histidine 1198 is the Proton acceptor; for 3-dehydroquinate dehydratase activity of the active site. The Schiff-base intermediate with substrate; for 3-dehydroquinate dehydratase activity role is filled by lysine 1227. Residues 1306–1588 are shikimate dehydrogenase; that stretch reads PKELFVVGKP…KAIFDAVTKE (283 aa).

This sequence in the N-terminal section; belongs to the sugar phosphate cyclases superfamily. Dehydroquinate synthase family. The protein in the 2nd section; belongs to the EPSP synthase family. It in the 3rd section; belongs to the shikimate kinase family. In the 4th section; belongs to the type-I 3-dehydroquinase family. This sequence in the C-terminal section; belongs to the shikimate dehydrogenase family. In terms of assembly, homodimer. The cofactor is Zn(2+).

The protein resides in the cytoplasm. It carries out the reaction 7-phospho-2-dehydro-3-deoxy-D-arabino-heptonate = 3-dehydroquinate + phosphate. The enzyme catalyses 3-dehydroquinate = 3-dehydroshikimate + H2O. The catalysed reaction is shikimate + NADP(+) = 3-dehydroshikimate + NADPH + H(+). It catalyses the reaction shikimate + ATP = 3-phosphoshikimate + ADP + H(+). It carries out the reaction 3-phosphoshikimate + phosphoenolpyruvate = 5-O-(1-carboxyvinyl)-3-phosphoshikimate + phosphate. It functions in the pathway metabolic intermediate biosynthesis; chorismate biosynthesis; chorismate from D-erythrose 4-phosphate and phosphoenolpyruvate: step 2/7. The protein operates within metabolic intermediate biosynthesis; chorismate biosynthesis; chorismate from D-erythrose 4-phosphate and phosphoenolpyruvate: step 3/7. Its pathway is metabolic intermediate biosynthesis; chorismate biosynthesis; chorismate from D-erythrose 4-phosphate and phosphoenolpyruvate: step 4/7. It participates in metabolic intermediate biosynthesis; chorismate biosynthesis; chorismate from D-erythrose 4-phosphate and phosphoenolpyruvate: step 5/7. It functions in the pathway metabolic intermediate biosynthesis; chorismate biosynthesis; chorismate from D-erythrose 4-phosphate and phosphoenolpyruvate: step 6/7. The AROM polypeptide catalyzes 5 consecutive enzymatic reactions in prechorismate polyaromatic amino acid biosynthesis. The chain is Pentafunctional AROM polypeptide from Saccharomyces cerevisiae (strain JAY291) (Baker's yeast).